We begin with the raw amino-acid sequence, 735 residues long: FHF complex subunit HOOK-interacting protein 2B (735 aa).

Residues 183 to 229 (SSSTSDEAAEKDCSGSSSPERASSPSSSSSACSLLSRSGAHPVSSPQ) are disordered. Residues 196-221 (SGSSSPERASSPSSSSSACSLLSRSG) are compositionally biased toward low complexity.

It belongs to the FHIP family.

This chain is FHF complex subunit HOOK-interacting protein 2B (fhip2b), found in Danio rerio (Zebrafish).